We begin with the raw amino-acid sequence, 150 residues long: Profilin (150 aa).

Belongs to the profilin family. Occurs in many kinds of cells as a complex with monomeric actin in a 1:1 ratio.

The protein localises to the cytoplasm. Its subcellular location is the cytoskeleton. Its function is as follows. Binds to actin and affects the structure of the cytoskeleton. At high concentrations, profilin prevents the polymerization of actin, whereas it enhances it at low concentrations. By binding to PIP2, it inhibits the formation of IP3 and DG. In Trypanosoma brucei brucei, this protein is Profilin.